A 356-amino-acid polypeptide reads, in one-letter code: Carbohydrate sulfotransferase 10 (356 aa).

The Cytoplasmic portion of the chain corresponds to 1–6; sequence MHHQWL. Residues 7–27 form a helical; Signal-anchor for type II membrane protein membrane-spanning segment; that stretch reads LLAACFWVIFMFMVASKFITL. Over 28-356 the chain is Lumenal; sequence TFKDPDVYSA…GYQKPDFLLN (329 aa). N-linked (GlcNAc...) asparagine glycosylation is present at N99. Residues 127–133 and 189–197 each bind 3'-phosphoadenylyl sulfate; these read PKVGNTQ and RDPFERLIS. N-linked (GlcNAc...) asparagine glycans are attached at residues N228 and N316.

Belongs to the sulfotransferase 2 family.

The protein resides in the golgi apparatus membrane. The catalysed reaction is 3-O-{beta-D-GlcA-(1-&gt;[3)-alpha-D-Xyl-(1-&gt;3)-beta-D-GlcA-(1-&gt;](n)-4)-beta-D-Xyl-(1-&gt;4)-Rib-ol-P-Rib-ol-P-3-beta-D-GalNAc-(1-&gt;3)-beta-D-GlcNAc-(1-&gt;4)-O-6-P-alpha-D-Man}-L-Thr-[protein] + 3'-phosphoadenylyl sulfate = 3-O-{O-3-S-beta-D-GlcA-(1-&gt;[3)-alpha-D-Xyl-(1-&gt;3)-beta-D-GlcA-(1-&gt;](n)-4)-beta-D-Xyl-(1-&gt;4)-Rib-ol-P-Rib-ol-P-3-beta-D-GalNAc-(1-&gt;3)-beta-D-GlcNAc-(1-&gt;4)-O-6-P-alpha-D-Man}-L-Thr-[protein] + adenosine 3',5'-bisphosphate + H(+). It catalyses the reaction 17beta-estradiol 3-O-(beta-D-glucuronate) + 3'-phosphoadenylyl sulfate = 17beta-estradiol 3-O-(3-sulfo-beta-D-glucuronate) + adenosine 3',5'-bisphosphate + H(+). It carries out the reaction 17beta-estradiol 3-O-(beta-D-glucuronate) 17-sulfate + 3'-phosphoadenylyl sulfate = 17beta-estradiol 3-O-(3-sulfo-beta-D-glucuronate) 17-sulfate + adenosine 3',5'-bisphosphate + H(+). The enzyme catalyses 17beta-estradiol 17-O-(beta-D-glucuronate) + 3'-phosphoadenylyl sulfate = 17beta-estradiol 17-O-(3-sulfo-beta-D-glucuronate) + adenosine 3',5'-bisphosphate + H(+). The catalysed reaction is 16alpha,17beta-estriol 3-O-(beta-D-glucuronate) + 3'-phosphoadenylyl sulfate = 16alpha,17beta-estriol 3-O-(3-sulfo-beta-D-glucuronate) + adenosine 3',5'-bisphosphate + H(+). It catalyses the reaction 16alpha,17beta-estriol 16-O-(beta-D-glucuronate) + 3'-phosphoadenylyl sulfate = 16alpha,17beta-estriol 16-O-(3-sulfo-beta-D-glucuronate) + adenosine 3',5'-bisphosphate + H(+). It carries out the reaction 16alpha,17beta-estriol 17-O-(beta-D-glucuronate) + 3'-phosphoadenylyl sulfate = 16alpha,17beta-estriol 17-O-(3-sulfo-beta-D-glucuronate) + adenosine 3',5'-bisphosphate + H(+). The enzyme catalyses estrone 3-O-(beta-D-glucuronate) + 3'-phosphoadenylyl sulfate = estrone 3-O-(3-sulfo-beta-D-glucuronate) + adenosine 3',5'-bisphosphate + H(+). The catalysed reaction is 3alpha,20alpha-dihydroxy-5beta-pregnane 3-O-(beta-D-glucuronate) + 3'-phosphoadenylyl sulfate = 3alpha,20alpha-dihydroxy-5beta-pregnane 3-O-(3-sulfo-beta-D-glucuronate) + adenosine 3',5'-bisphosphate + H(+). It catalyses the reaction testosterone 17-O-(beta-D-glucuronate) + 3'-phosphoadenylyl sulfate = testosterone 17-O-(3-sulfo-beta-D-glucuronate) + adenosine 3',5'-bisphosphate + H(+). It carries out the reaction 3beta-androst-5-en-17-one 3-O-(beta-D-glucuronate) + 3'-phosphoadenylyl sulfate = 3beta-androst-5-en-17-one 3-O-(3-sulfo-beta-D-glucuronate) + adenosine 3',5'-bisphosphate + H(+). The enzyme catalyses 3alpha,17alpha-dihydroxy-5beta-androstane-11-one-17beta-carboxylate 3-O-(beta-D-glucuronate) + 3'-phosphoadenylyl sulfate = 3alpha,17alpha-dihydroxy-5beta-androstane-11-one-17beta-carboxylate 3-O-(3-sulfo-beta-D-glucuronate) + adenosine 3',5'-bisphosphate + H(+). The catalysed reaction is 3alpha-hydroxyetiocholan-17-one 3-O-(beta-D-glucuronate) + 3'-phosphoadenylyl sulfate = 3alpha-hydroxyetiocholan-17-one 3-O-(3-sulfo-beta-D-glucuronate) + adenosine 3',5'-bisphosphate + H(+). The protein operates within steroid metabolism. It participates in protein modification; carbohydrate sulfation. In terms of biological role, catalyzes the transfer of sulfate from 3'-phosphoadenylyl sulfate (PAPS) to position 3 of terminal glucuronic acid of both protein- and lipid-linked oligosaccharides. Participates in biosynthesis of HNK-1 carbohydrate structure 3-O-sulfo-beta-D-GlcA-(1-&gt;3)-beta-D-Gal-(1-&gt;4)-D-GlcNAc-R, a sulfated glucuronyl-lactosaminyl residue carried by many neural recognition molecules, which is involved in cell interactions during ontogenetic development and in synaptic plasticity in the adult. May be indirectly involved in synapse plasticity of the hippocampus, via its role in HNK-1 biosynthesis. Sulfates terminal glucuronyl residue of the laminin globular (LG)-domain binding epitope on DAG1/alpha-dystroglycan and prevents further polymerization by LARGE1 glycosyltransferase. Likely defines the chain length of LG epitope, conferring binding specificity to extracellular matrix components. Plays a role in down-regulating the steroid hormones. Sulfates glucuronidated estrogens and androgens with an impact in hormone cycle and fertility. Has a preference for glucuronyl moiety at the 3-hydroxyl group of a sterol ring rather than the 17-hydroxyl group, showing high catalytic efficiency for 17beta-estradiol 3-O-(beta-D-glucuronate) and dehydroepiandrosterone 3-O-(beta-D-glucuronate) hormones. The sequence is that of Carbohydrate sulfotransferase 10 (CHST10) from Pongo abelii (Sumatran orangutan).